Consider the following 356-residue polypeptide: Phospho-N-acetylmuramoyl-pentapeptide-transferase (356 aa).

The next 10 helical transmembrane spans lie at 27–47 (ATLM…INML), 73–93 (TMGG…WMDL), 97–117 (FVWA…LDDL), 138–158 (FLVA…WLYV), 165–185 (AIPL…GAGN), 195–215 (GLAI…AYLA), 232–252 (AGEL…FLWF), 258–278 (AVFM…AIAV), 284–304 (IVLA…IIQV), and 333–353 (KVVI…LATL).

This sequence belongs to the glycosyltransferase 4 family. MraY subfamily. Requires Mg(2+) as cofactor.

The protein resides in the cell inner membrane. The catalysed reaction is UDP-N-acetyl-alpha-D-muramoyl-L-alanyl-gamma-D-glutamyl-meso-2,6-diaminopimeloyl-D-alanyl-D-alanine + di-trans,octa-cis-undecaprenyl phosphate = di-trans,octa-cis-undecaprenyl diphospho-N-acetyl-alpha-D-muramoyl-L-alanyl-D-glutamyl-meso-2,6-diaminopimeloyl-D-alanyl-D-alanine + UMP. It participates in cell wall biogenesis; peptidoglycan biosynthesis. In terms of biological role, catalyzes the initial step of the lipid cycle reactions in the biosynthesis of the cell wall peptidoglycan: transfers peptidoglycan precursor phospho-MurNAc-pentapeptide from UDP-MurNAc-pentapeptide onto the lipid carrier undecaprenyl phosphate, yielding undecaprenyl-pyrophosphoryl-MurNAc-pentapeptide, known as lipid I. The polypeptide is Phospho-N-acetylmuramoyl-pentapeptide-transferase (Erythrobacter litoralis (strain HTCC2594)).